Consider the following 183-residue polypeptide: Hypoxanthine-guanine-xanthine phosphoribosyltransferase (183 aa).

GMP contacts are provided by residues 102 to 110, Lys134, and Asp163; that span reads EDIIDTGLT. The active-site Proton acceptor is Asp106. Asp163 serves as a coordination point for Mg(2+).

As to quaternary structure, homodimer. The cofactor is Mg(2+).

It localises to the cytoplasm. It catalyses the reaction IMP + diphosphate = hypoxanthine + 5-phospho-alpha-D-ribose 1-diphosphate. It carries out the reaction GMP + diphosphate = guanine + 5-phospho-alpha-D-ribose 1-diphosphate. The enzyme catalyses XMP + diphosphate = xanthine + 5-phospho-alpha-D-ribose 1-diphosphate. The protein operates within purine metabolism; GMP biosynthesis via salvage pathway; GMP from guanine: step 1/1. It functions in the pathway purine metabolism; IMP biosynthesis via salvage pathway; IMP from hypoxanthine: step 1/1. Its pathway is purine metabolism; XMP biosynthesis via salvage pathway; XMP from xanthine: step 1/1. In terms of biological role, essential in nucleic acid metabolism of T.foetus because the parasite is unable to synthesize purine nucleotides de novo and relies on the HGXPRTase activities for its purine requirements by salvaging purine bases from the host. Works with guanine, hypoxanthine and xanthine. In Tritrichomonas foetus (Trichomonas foetus), this protein is Hypoxanthine-guanine-xanthine phosphoribosyltransferase (HPT).